Reading from the N-terminus, the 179-residue chain is Large ribosomal subunit protein uL5 (179 aa).

Belongs to the universal ribosomal protein uL5 family. As to quaternary structure, part of the 50S ribosomal subunit; part of the 5S rRNA/L5/L18/L25 subcomplex. Contacts the 5S rRNA and the P site tRNA. Forms a bridge to the 30S subunit in the 70S ribosome.

In terms of biological role, this is one of the proteins that bind and probably mediate the attachment of the 5S RNA into the large ribosomal subunit, where it forms part of the central protuberance. In the 70S ribosome it contacts protein S13 of the 30S subunit (bridge B1b), connecting the 2 subunits; this bridge is implicated in subunit movement. Contacts the P site tRNA; the 5S rRNA and some of its associated proteins might help stabilize positioning of ribosome-bound tRNAs. The protein is Large ribosomal subunit protein uL5 of Neisseria gonorrhoeae (strain ATCC 700825 / FA 1090).